The chain runs to 158 residues: 2-C-methyl-D-erythritol 2,4-cyclodiphosphate synthase (158 aa).

A divalent metal cation contacts are provided by D9 and H11. Residues 9 to 11 (DVH) and 35 to 36 (HS) contribute to the 4-CDP-2-C-methyl-D-erythritol 2-phosphate site. H43 contributes to the a divalent metal cation binding site. 4-CDP-2-C-methyl-D-erythritol 2-phosphate-binding positions include 57 to 59 (DIG), 62 to 66 (FPDTD), 101 to 107 (AQKPKMA), 133 to 136 (TTTE), F140, and R143.

This sequence belongs to the IspF family. Homotrimer. Requires a divalent metal cation as cofactor.

The catalysed reaction is 4-CDP-2-C-methyl-D-erythritol 2-phosphate = 2-C-methyl-D-erythritol 2,4-cyclic diphosphate + CMP. The protein operates within isoprenoid biosynthesis; isopentenyl diphosphate biosynthesis via DXP pathway; isopentenyl diphosphate from 1-deoxy-D-xylulose 5-phosphate: step 4/6. In terms of biological role, involved in the biosynthesis of isopentenyl diphosphate (IPP) and dimethylallyl diphosphate (DMAPP), two major building blocks of isoprenoid compounds. Catalyzes the conversion of 4-diphosphocytidyl-2-C-methyl-D-erythritol 2-phosphate (CDP-ME2P) to 2-C-methyl-D-erythritol 2,4-cyclodiphosphate (ME-CPP) with a corresponding release of cytidine 5-monophosphate (CMP). This Geobacillus sp. (strain WCH70) protein is 2-C-methyl-D-erythritol 2,4-cyclodiphosphate synthase.